The sequence spans 517 residues: Xaa-Pro dipeptidase (517 aa).

D244, D255, H336, E381, and E420 together coordinate Mn(2+).

This sequence belongs to the peptidase M24B family. Bacterial-type prolidase subfamily. As to quaternary structure, monomer. Requires Mn(2+) as cofactor.

The enzyme catalyses Xaa-L-Pro dipeptide + H2O = an L-alpha-amino acid + L-proline. The catalysed reaction is diisopropyl fluorophosphate + H2O = diisopropyl phosphate + fluoride + 2 H(+). It catalyses the reaction An aryl dialkyl phosphate + H2O = dialkyl phosphate + an aryl alcohol.. Functionally, splits dipeptides with a prolyl or hydroxyprolyl residue in the C-terminal position and a nonpolar amino acid at the N-terminal position. Also catalyzes the hydrolysis of toxic organophosphorus cholinesterase-inhibiting compounds including insecticide paraoxon and nerve gases such as diisopropylfluorophosphate (DFP), O-isopropyl methylphosphonofluoridate (sarin), O-pinacolyl methylphosphonofluoridate (soman), and O-cyclohexyl methylphosphonofluoridate. The sequence is that of Xaa-Pro dipeptidase (pepQ) from Alteromonas sp.